A 297-amino-acid chain; its full sequence is Probable GTP 3',8-cyclase (297 aa).

The Radical SAM core domain maps to 4 to 227 (RYGRQIRSFR…MQNRKKYVID (224 aa)). Arg-13 is a GTP binding site. Residues Cys-20 and Cys-24 each contribute to the [4Fe-4S] cluster site. Tyr-26 is a binding site for S-adenosyl-L-methionine. Cys-27 provides a ligand contact to [4Fe-4S] cluster. GTP is bound at residue Lys-61. S-adenosyl-L-methionine is bound at residue Gly-65. Thr-91 contributes to the GTP binding site. Ser-115 provides a ligand contact to S-adenosyl-L-methionine. Position 152 (Lys-152) interacts with GTP. Cys-243 and Cys-246 together coordinate [4Fe-4S] cluster. 248 to 250 (RIR) provides a ligand contact to GTP. Residue Cys-260 participates in [4Fe-4S] cluster binding.

Belongs to the radical SAM superfamily. MoaA family. [4Fe-4S] cluster serves as cofactor.

The catalysed reaction is GTP + AH2 + S-adenosyl-L-methionine = (8S)-3',8-cyclo-7,8-dihydroguanosine 5'-triphosphate + 5'-deoxyadenosine + L-methionine + A + H(+). The protein operates within cofactor biosynthesis; molybdopterin biosynthesis. Catalyzes the cyclization of GTP to (8S)-3',8-cyclo-7,8-dihydroguanosine 5'-triphosphate. The chain is Probable GTP 3',8-cyclase from Methanococcus maripaludis (strain DSM 14266 / JCM 13030 / NBRC 101832 / S2 / LL).